A 402-amino-acid polypeptide reads, in one-letter code: Nuclear hormone receptor family member nhr-96 (402 aa).

Residues 4–79 (FGLCAVCGQV…VGMDVKKIQQ (76 aa)) constitute a DNA-binding region (nuclear receptor). 2 consecutive NR C4-type zinc fingers follow at residues 7-27 (CAVC…CRSC) and 44-67 (CVKA…LKRC). The NR LBD domain maps to 154-402 (NYYNSLELLT…FSDPEMFELT (249 aa)).

This sequence belongs to the nuclear hormone receptor family.

It is found in the nucleus. In terms of biological role, orphan nuclear receptor. This Caenorhabditis elegans protein is Nuclear hormone receptor family member nhr-96 (nhr-96).